The primary structure comprises 93 residues: Integration host factor subunit beta (93 aa).

The segment at 59–93 is disordered; it reads RVGRNPKTGQSVSLDGKFVPHFKPGKELRDRVNDD. A compositionally biased stretch (basic and acidic residues) spans 82–93; the sequence is PGKELRDRVNDD.

Belongs to the bacterial histone-like protein family. In terms of assembly, heterodimer of an alpha and a beta chain.

In terms of biological role, this protein is one of the two subunits of integration host factor, a specific DNA-binding protein that functions in genetic recombination as well as in transcriptional and translational control. The chain is Integration host factor subunit beta from Stutzerimonas stutzeri (strain A1501) (Pseudomonas stutzeri).